A 540-amino-acid chain; its full sequence is Amino acid transporter AVT1B (540 aa).

Residues 1-11 are compositionally biased toward polar residues; sequence MNHSTSDQSLY. A disordered region spans residues 1–55; the sequence is MNHSTSDQSLYIESDDGDDERKHLSDDEDDDGTLSDTSDAYNQNQHHLSKASPYS. A run of 11 helical transmembrane segments spans residues 155–175, 180–200, 227–247, 273–293, 297–317, 332–352, 367–387, 412–432, 452–474, 478–500, and 511–531; these read AVLN…PYAV, WLGL…GLLL, ILVS…YIIL, LFAL…DLSV, ISAG…WVGL, LATL…HGVF, AVLL…AVMG, IALW…LSPV, IAIR…FFGL, LIGS…LSIL, and ICIL…YSAL.

This sequence belongs to the amino acid/polyamine transporter 2 family. Amino acid/auxin permease (AAAP) (TC 2.A.18.5) subfamily.

Its subcellular location is the membrane. The polypeptide is Amino acid transporter AVT1B (Arabidopsis thaliana (Mouse-ear cress)).